We begin with the raw amino-acid sequence, 234 residues long: Sugar fermentation stimulation protein A (234 aa).

Positions 201–220 form a DNA-binding region, H-T-H motif; that stretch reads LLSEAQQRGVEILAYKAEIS.

The protein belongs to the SfsA family.

Functionally, binds to DNA non-specifically. Could be a regulatory factor involved in maltose metabolism. In Shigella dysenteriae serotype 1 (strain Sd197), this protein is Sugar fermentation stimulation protein A.